The following is a 652-amino-acid chain: Serine/threonine-protein kinase ssp1 (652 aa).

Position 58 is a phosphotyrosine (Tyr-58). Position 59 is a phosphoserine (Ser-59). Phosphotyrosine is present on Tyr-63. Residues 135–409 form the Protein kinase domain; sequence YEIIKELGRG…LVEVKLHPWT (275 aa). ATP contacts are provided by residues 141 to 149 and Lys-164; that span reads LGRGMHGKV. Asp-267 (proton acceptor) is an active-site residue. Disordered stretches follow at residues 467–491 and 506–529; these read DSSS…SIGL and NESQ…SSEK. Residues 508 to 518 are compositionally biased toward basic and acidic residues; it reads SQKDRERKQVH.

The protein belongs to the protein kinase superfamily. Ser/Thr protein kinase family.

The protein localises to the cytoplasm. The catalysed reaction is L-seryl-[protein] + ATP = O-phospho-L-seryl-[protein] + ADP + H(+). It carries out the reaction L-threonyl-[protein] + ATP = O-phospho-L-threonyl-[protein] + ADP + H(+). Its function is as follows. Involved in actin localization and thus in polarized cell growth. The chain is Serine/threonine-protein kinase ssp1 (ssp1) from Schizosaccharomyces pombe (strain 972 / ATCC 24843) (Fission yeast).